The sequence spans 553 residues: Membrane protein insertase YidC (553 aa).

The next 5 membrane-spanning stretches (helical) occupy residues 7 to 24 (VLWVIFFMSAVMLYDNWQ), 365 to 385 (WGWAIVLLTVLIKAVFFPLSA), 435 to 455 (LPVVIQIPVFISLYWVLLASV), 474 to 494 (PFFILPVLMAVSMFVQTSLNP), and 509 to 529 (PIAFSVMFFFFPAGLVLYYVV).

It belongs to the OXA1/ALB3/YidC family. Type 1 subfamily. Interacts with the Sec translocase complex via SecD. Specifically interacts with transmembrane segments of nascent integral membrane proteins during membrane integration.

It is found in the cell inner membrane. Required for the insertion and/or proper folding and/or complex formation of integral membrane proteins into the membrane. Involved in integration of membrane proteins that insert both dependently and independently of the Sec translocase complex, as well as at least some lipoproteins. Aids folding of multispanning membrane proteins. This Burkholderia orbicola (strain MC0-3) protein is Membrane protein insertase YidC.